We begin with the raw amino-acid sequence, 62 residues long: Guanine nucleotide-binding protein subunit gamma (62 aa).

Residue C59 is modified to Cysteine methyl ester. A lipid anchor (S-geranylgeranyl cysteine) is attached at C59. Residues 60 to 62 (SVL) constitute a propeptide, removed in mature form.

The protein belongs to the G protein gamma family. G proteins are composed of 3 units, alpha, beta and gamma. Interacts with gpb-1 and gpb-2.

It localises to the cell membrane. In terms of biological role, guanine nucleotide-binding proteins (G proteins) are involved as a modulator or transducer in various transmembrane signaling systems. The beta and gamma chains are required for the GTPase activity, for replacement of GDP by GTP, and for G protein-effector interaction. The protein is Guanine nucleotide-binding protein subunit gamma (gpc-1) of Caenorhabditis briggsae.